We begin with the raw amino-acid sequence, 1233 residues long: NACHT, LRR and PYD domains-containing protein 1b allele 1 (1233 aa).

The tract at residues 1 to 22 (MEESPPKQKSNTKVAQHEGQQD) is disordered. The 310-residue stretch at 126 to 435 (QLVIIEGAAG…EFFAAISCIL (310 aa)) folds into the NACHT domain. An ATP-binding site is contributed by 132-139 (GAAGIGKS). 2 LRR repeats span residues 627–647 (NLEGLDLSGNSLRYSVVQSLC) and 684–704 (SLTELYLQLNDLGDDGVRMLC). Positions 850–983 (FWGPIGPVAT…GYTVLKNPSF (134 aa)) are ZU5. The FIIND domain occupies 850–1133 (FWGPIGPVAT…LRPALPRIAQ (284 aa)). The UPA stretch occupies residues 984-1133 (SPMGVVLRII…LRPALPRIAQ (150 aa)). Positions 1143–1226 (HFMDQHREQL…HLVMDLLEKS (84 aa)) constitute a CARD domain.

This sequence belongs to the NLRP family. Interacts with DPP9; leading to inhibit activation of the inflammasome. DPP9 acts via formation of a ternary complex, composed of a DPP9 homodimer, one full-length Nlrp1b protein, and one cleaved C-terminus of Nlrp1b (NACHT, LRR and PYD domains-containing protein 1b, C-terminus). Interacts with DPP8; leading to inhibit activation of the inflammasome, probably via formation of a ternary complex with DPP8. Interacts (via LRR repeats) with BCL2 and BCL2L1 (via the loop between motifs BH4 and BH3). Interacts with NOD2; this interaction may increase IL1B release. Interacts with EIF2AK2/PKR; this interaction requires EIF2AK2 activity, is accompanied by EIF2AK2 autophosphorylation and promotes inflammasome assembly in response to B.anthracis lethal toxin. Interacts with MEFV; this interaction targets Nlrp1b to degradation by autophagy, hence preventing excessive IL1B- and IL18-mediated inflammation. In terms of assembly, interacts with the C-terminal part of Nlrp1b (NACHT, LRR and PYD domains-containing protein 1b, C-terminus) in absence of pathogens and other damage-associated signals. As to quaternary structure, interacts with the N-terminal part of Nlrp1b (NACHT, LRR and PYD domains-containing protein 1b, N-terminus) in absence of pathogens and other damage-associated signals. Homomultimer; forms the Nlrp1b inflammasome polymeric complex, a filament composed of homopolymers of this form in response to pathogens and other damage-associated signals. The Nlrp1b inflammasome polymeric complex directly recruits pro-caspase-1 (proCASP1) independently of PYCARD/ASC. Interacts (via CARD domain) with CASP1 (via CARD domain); leading to CASP1 activation. Post-translationally, autocatalytically cleaved. Autocatalytic cleavage in FIIND region occurs constitutively, prior to activation signals, and is required for inflammasome activity (IL1B release), possibly by facilitating CASP1 binding. Both N- and C-terminal parts remain associated non-covalently. In terms of processing, ubiquitinated by UBR2, a component of the N-end rule pathway in response to pathogens and other damage-associated signals, leading to its degradation by the proteasome and subsequent release of the cleaved C-terminal part of the protein (NACHT, LRR and PYD domains-containing protein 1b, C-terminus), which polymerizes and forms the Nlrp1b inflammasome. (Microbial infection) Cleavage by B.anthracis lethal toxin (LT) endopeptidase promotes ubiquitination and degradation of the N-terminal part, releasing the cleaved C-terminal part of the protein (NACHT, LRR and PYD domains-containing protein 1b, C-terminus), which polymerizes and forms the Nlrp1b inflammasome. Post-translationally, (Microbial infection) Ubiquitinated by S.flexneri IpaH7.8, leading to its degradation by the proteasome and subsequent release of the cleaved C-terminal part of the protein (NACHT, LRR and PYD domains-containing protein 1b, C-terminus), which polymerizes and forms the Nlrp1b inflammasome. As to expression, widely expressed, including in macrophages.

The protein localises to the cytoplasm. The protein resides in the cytosol. It localises to the membrane. It is found in the inflammasome. With respect to regulation, activated by cleavage by B.anthracis lethal toxin (LT) endopeptidase: cleavage by LT promotes ubiquitination and degradation of the N-terminal part, releasing the cleaved C-terminal part of the protein (NACHT, LRR and PYD domains-containing protein 1b, C-terminus), which polymerizes and forms the Nlrp1b inflammasome. Activated by S.flexneri IpaH7.8, an E3 ubiquitin ligase that mediates ubiquitination and degradation of the N-terminal part, releasing the cleaved C-terminal part of the protein, which polymerizes and forms the Nlrp1b inflammasome. Nlrp1b inflammasome is inhibited by DPP8 and DPP9, which sequester the C-terminal fragment of Nlrp1b (NACHT, LRR and PYD domains-containing protein 1b, C-terminus) in a ternary complex, thereby preventing Nlrp1b oligomerization and activation. Nlrp1b inflammasome is activated by Val-boroPro (Talabostat, PT-100), an inhibitor of dipeptidyl peptidases DPP8 and DPP9. Val-boroPro relieves inhibition of DPP8 and/or DPP9 by promoting disruption of the ternary complex, releasing its C-terminal part from autoinhibition. Activated by metabolic inhibitors, such as 2-deoxy-D-glucose and sodium azide, by nutrient deprivation and hypoxia, possibly due to a decrease in cytosolic ATP. Also activated by Toxoplasma gondii. Not activated by muramyl dipeptide, nor by full-length bacterial peptidoglycan. Contrary to its human ortholog, not activated by positive-strand RNA virus such as Semliki Forrest virus or long dsRNA. Acts as the sensor component of the Nlrp1b inflammasome, which mediates inflammasome activation in response to various pathogen-associated signals, leading to subsequent pyroptosis. Inflammasomes are supramolecular complexes that assemble in the cytosol in response to pathogens and other damage-associated signals and play critical roles in innate immunity and inflammation. Acts as a recognition receptor (PRR): recognizes specific pathogens and other damage-associated signals, such as B.anthracis lethal toxin (LT) or Val-boroPro inhibitor, and mediates the formation of the inflammasome polymeric complex. In response to pathogen-associated signals, the N-terminal part of Nlrp1b is degraded by the proteasome, releasing the cleaved C-terminal part of the protein (NACHT, LRR and PYD domains-containing protein 1b, C-terminus), which polymerizes to initiate the formation of the inflammasome complex: the inflammasome directly recruits pro-caspase-1 (proCASP1) independently of PYCARD/ASC and promotes caspase-1 (CASP1) activation, which subsequently cleaves and activates inflammatory cytokines IL1B and IL18 and gasdermin-D (GSDMD), leading to pyroptosis. In the absence of GSDMD expression, the Nlrp1b inflammasome is able to recruit and activate CASP8, leading to activation of gasdermin-E (GSDME). Activation of Nlrp1b inflammasome is also required for HMGB1 secretion; the active cytokines and HMGB1 stimulate inflammatory responses. Primary mediator of macrophage susceptibility to B.anthracis LT: in response to B.anthracis infection, macrophages and dendritic cells release IL1B and undergo pyroptosis. This early inflammatory response to the toxin increases resistance to infection by B.anthracis spores. Its function is as follows. Constitutes the precursor of the Nlrp1b inflammasome, which mediates autoproteolytic processing within the FIIND domain to generate the N-terminal and C-terminal parts, which are associated non-covalently in absence of pathogens and other damage-associated signals. Functionally, regulatory part that prevents formation of the Nlrp1b inflammasome: in absence of pathogens and other damage-associated signals, interacts with the C-terminal part of Nlrp1b (NACHT, LRR and PYD domains-containing protein 1b, C-terminus), preventing activation of the Nlrp1b inflammasome. In response to pathogen-associated signals, this part is ubiquitinated by the N-end rule pathway and degraded by the proteasome, releasing the cleaved C-terminal part of the protein, which polymerizes and forms the Nlrp1b inflammasome. In terms of biological role, constitutes the active part of the Nlrp1b inflammasome. In absence of pathogens and other damage-associated signals, interacts with the N-terminal part of Nlrp1b (NACHT, LRR and PYD domains-containing protein 1b, N-terminus), preventing activation of the Nlrp1b inflammasome. In response to pathogen-associated signals, the N-terminal part of Nlrp1b is degraded by the proteasome, releasing this form, which polymerizes to form the Nlrp1b inflammasome complex: the Nlrp1b inflammasome complex then directly recruits pro-caspase-1 (proCASP1) and promotes caspase-1 (CASP1) activation, leading to gasdermin-D (GSDMD) cleavage and subsequent pyroptosis. In Mus musculus (Mouse), this protein is NACHT, LRR and PYD domains-containing protein 1b allele 1.